The sequence spans 240 residues: SURF1-like protein (240 aa).

2 consecutive transmembrane segments (helical) span residues 7–23 (VFITFTILISLGFWQLS) and 201–219 (YALTWFGLAISLIVIYVIY).

This sequence belongs to the SURF1 family.

It localises to the cell membrane. The chain is SURF1-like protein from Rickettsia conorii (strain ATCC VR-613 / Malish 7).